The sequence spans 181 residues: Adenine phosphoribosyltransferase (181 aa).

Belongs to the purine/pyrimidine phosphoribosyltransferase family. As to quaternary structure, homodimer.

It is found in the cytoplasm. It catalyses the reaction AMP + diphosphate = 5-phospho-alpha-D-ribose 1-diphosphate + adenine. It functions in the pathway purine metabolism; AMP biosynthesis via salvage pathway; AMP from adenine: step 1/1. Its function is as follows. Catalyzes a salvage reaction resulting in the formation of AMP, that is energically less costly than de novo synthesis. The protein is Adenine phosphoribosyltransferase of Acidobacterium capsulatum (strain ATCC 51196 / DSM 11244 / BCRC 80197 / JCM 7670 / NBRC 15755 / NCIMB 13165 / 161).